Reading from the N-terminus, the 288-residue chain is 4-diphosphocytidyl-2-C-methyl-D-erythritol kinase (288 aa).

Residue lysine 13 is part of the active site. Position 96–106 (96–106) interacts with ATP; it reads PMGGGIGGGSS. Aspartate 138 is a catalytic residue.

The protein belongs to the GHMP kinase family. IspE subfamily.

It catalyses the reaction 4-CDP-2-C-methyl-D-erythritol + ATP = 4-CDP-2-C-methyl-D-erythritol 2-phosphate + ADP + H(+). The protein operates within isoprenoid biosynthesis; isopentenyl diphosphate biosynthesis via DXP pathway; isopentenyl diphosphate from 1-deoxy-D-xylulose 5-phosphate: step 3/6. In terms of biological role, catalyzes the phosphorylation of the position 2 hydroxy group of 4-diphosphocytidyl-2C-methyl-D-erythritol. The polypeptide is 4-diphosphocytidyl-2-C-methyl-D-erythritol kinase (Aliivibrio fischeri (strain ATCC 700601 / ES114) (Vibrio fischeri)).